A 297-amino-acid chain; its full sequence is 4-hydroxy-tetrahydrodipicolinate synthase (297 aa).

Residue threonine 49 coordinates pyruvate. The active-site Proton donor/acceptor is tyrosine 137. The Schiff-base intermediate with substrate role is filled by lysine 166. Isoleucine 208 is a pyruvate binding site.

This sequence belongs to the DapA family. In terms of assembly, homotetramer; dimer of dimers.

It localises to the cytoplasm. The enzyme catalyses L-aspartate 4-semialdehyde + pyruvate = (2S,4S)-4-hydroxy-2,3,4,5-tetrahydrodipicolinate + H2O + H(+). Its pathway is amino-acid biosynthesis; L-lysine biosynthesis via DAP pathway; (S)-tetrahydrodipicolinate from L-aspartate: step 3/4. In terms of biological role, catalyzes the condensation of (S)-aspartate-beta-semialdehyde [(S)-ASA] and pyruvate to 4-hydroxy-tetrahydrodipicolinate (HTPA). In Prosthecochloris aestuarii (strain DSM 271 / SK 413), this protein is 4-hydroxy-tetrahydrodipicolinate synthase.